An 893-amino-acid chain; its full sequence is Translation initiation factor IF-2 (893 aa).

2 disordered regions span residues 135-169 and 201-300; these read KAKA…KAEE and ENEK…ESMD. The span at 201–224 shows a compositional bias: basic and acidic residues; the sequence is ENEKRWAEEEKARKEAEKTVDHHV. A compositionally biased stretch (low complexity) spans 251-265; sequence PSANAGNNANANAGA. The tr-type G domain occupies 393-562; it reads SRAPVVTIMG…LLEAEVLELK (170 aa). Residues 402–409 are G1; that stretch reads GHVDHGKT. Position 402-409 (402-409) interacts with GTP; that stretch reads GHVDHGKT. The interval 427–431 is G2; it reads GITQH. The tract at residues 448 to 451 is G3; sequence DTPG. GTP is bound by residues 448–452 and 502–505; these read DTPGH and NKMD. A G4 region spans residues 502–505; that stretch reads NKMD. The segment at 538 to 540 is G5; the sequence is SAK.

The protein belongs to the TRAFAC class translation factor GTPase superfamily. Classic translation factor GTPase family. IF-2 subfamily.

Its subcellular location is the cytoplasm. Functionally, one of the essential components for the initiation of protein synthesis. Protects formylmethionyl-tRNA from spontaneous hydrolysis and promotes its binding to the 30S ribosomal subunits. Also involved in the hydrolysis of GTP during the formation of the 70S ribosomal complex. The sequence is that of Translation initiation factor IF-2 from Shewanella halifaxensis (strain HAW-EB4).